A 554-amino-acid polypeptide reads, in one-letter code: ATP synthase subunit alpha (554 aa).

ATP is bound at residue 172-179 (GDRKTGKT). The interval 528-554 (LDEEELEKESVKVKKPAPEKKAKKEQK) is disordered. The span at 535 to 554 (KESVKVKKPAPEKKAKKEQK) shows a compositional bias: basic and acidic residues.

It belongs to the ATPase alpha/beta chains family. In terms of assembly, F-type ATPases have 2 components, CF(1) - the catalytic core - and CF(0) - the membrane proton channel. CF(1) has five subunits: alpha(3), beta(3), gamma(1), delta(1), epsilon(1). CF(0) has three main subunits: a(1), b(2) and c(9-12). The alpha and beta chains form an alternating ring which encloses part of the gamma chain. CF(1) is attached to CF(0) by a central stalk formed by the gamma and epsilon chains, while a peripheral stalk is formed by the delta and b chains.

Its subcellular location is the cell membrane. It catalyses the reaction ATP + H2O + 4 H(+)(in) = ADP + phosphate + 5 H(+)(out). Functionally, produces ATP from ADP in the presence of a proton gradient across the membrane. The alpha chain is a regulatory subunit. In Mycolicibacterium paratuberculosis (strain ATCC BAA-968 / K-10) (Mycobacterium paratuberculosis), this protein is ATP synthase subunit alpha.